The chain runs to 149 residues: MKFFVVFVMAVAYSKLYELIKNVKDEKEAEELCKIIEEFFEKQCKENVSKKFEEQKPVLKLELKEELRKELTTKEDLELIGEKILRYVDNKINQVIEKINQLDKKIDEGFYQLDKKVDTLKRDIIIIALIIILANYAPSIIGKILSFLK.

The chain crosses the membrane as a helical span at residues 124-144 (IIIIALIIILANYAPSIIGKI).

Belongs to the M.jannaschii MJ0023/MJ0349/MJ1072/MJ1074/MJ1107/MJECL16 family.

Its subcellular location is the membrane. This is an uncharacterized protein from Methanocaldococcus jannaschii (strain ATCC 43067 / DSM 2661 / JAL-1 / JCM 10045 / NBRC 100440) (Methanococcus jannaschii).